Here is a 426-residue protein sequence, read N- to C-terminus: DNA polymerase processivity factor component A20 (426 aa).

The protein belongs to the poxviruses A20 family. As to quaternary structure, interacts with the DNA polymerase catalytic subunit E9. Interacts with UDG. Component of the Uracil-DNA glycosylase(UDG)-A20-polymerase complex; A20 and UDG form a heterodimeric processivity factor that associates with E9 to form the processive polymerase holoenzyme. Interacts with D5.

Plays an essential role in viral DNA replication by acting as the polymerase processivity factor together with protein D4. May serve as a bridge which links the DNA polymerase E9 and the uracil DNA glycosylase. The protein is DNA polymerase processivity factor component A20 of Vaccinia virus (strain Ankara) (VACV).